The following is a 205-amino-acid chain: Protein-L-isoaspartate O-methyltransferase (205 aa).

Residue serine 56 is part of the active site.

This sequence belongs to the methyltransferase superfamily. L-isoaspartyl/D-aspartyl protein methyltransferase family.

It is found in the cytoplasm. The enzyme catalyses [protein]-L-isoaspartate + S-adenosyl-L-methionine = [protein]-L-isoaspartate alpha-methyl ester + S-adenosyl-L-homocysteine. Catalyzes the methyl esterification of L-isoaspartyl residues in peptides and proteins that result from spontaneous decomposition of normal L-aspartyl and L-asparaginyl residues. It plays a role in the repair and/or degradation of damaged proteins. The chain is Protein-L-isoaspartate O-methyltransferase from Aeromonas hydrophila subsp. hydrophila (strain ATCC 7966 / DSM 30187 / BCRC 13018 / CCUG 14551 / JCM 1027 / KCTC 2358 / NCIMB 9240 / NCTC 8049).